Reading from the N-terminus, the 475-residue chain is Eukaryotic translation initiation factor 3 subunit L (475 aa).

Residues Asp257–Leu451 form the PCI domain.

Belongs to the eIF-3 subunit L family. In terms of assembly, component of the eukaryotic translation initiation factor 3 (eIF-3) complex.

Its subcellular location is the cytoplasm. Its function is as follows. Component of the eukaryotic translation initiation factor 3 (eIF-3) complex, which is involved in protein synthesis of a specialized repertoire of mRNAs and, together with other initiation factors, stimulates binding of mRNA and methionyl-tRNAi to the 40S ribosome. The eIF-3 complex specifically targets and initiates translation of a subset of mRNAs involved in cell proliferation. The protein is Eukaryotic translation initiation factor 3 subunit L of Sclerotinia sclerotiorum (strain ATCC 18683 / 1980 / Ss-1) (White mold).